Reading from the N-terminus, the 504-residue chain is ATP synthase subunit beta (504 aa).

The tract at residues 1–23 (MAKAATPKETAAAKKPAAPKKAA) is disordered. 182–189 (GGAGVGKT) is an ATP binding site.

Belongs to the ATPase alpha/beta chains family. In terms of assembly, F-type ATPases have 2 components, CF(1) - the catalytic core - and CF(0) - the membrane proton channel. CF(1) has five subunits: alpha(3), beta(3), gamma(1), delta(1), epsilon(1). CF(0) has three main subunits: a(1), b(2) and c(9-12). The alpha and beta chains form an alternating ring which encloses part of the gamma chain. CF(1) is attached to CF(0) by a central stalk formed by the gamma and epsilon chains, while a peripheral stalk is formed by the delta and b chains.

Its subcellular location is the cell inner membrane. The catalysed reaction is ATP + H2O + 4 H(+)(in) = ADP + phosphate + 5 H(+)(out). In terms of biological role, produces ATP from ADP in the presence of a proton gradient across the membrane. The catalytic sites are hosted primarily by the beta subunits. In Rhizobium meliloti (strain 1021) (Ensifer meliloti), this protein is ATP synthase subunit beta.